Here is a 972-residue protein sequence, read N- to C-terminus: Aminopeptidase Ey (972 aa).

The Cytoplasmic segment spans residues Ala-2–Ser-10. Residues Val-11–Val-31 traverse the membrane as a helical; Signal-anchor for type II membrane protein segment. At Val-32 to Ser-972 the chain is on the extracellular side. Residues Tyr-33–Asn-72 are cytosolic Ser/Thr-rich junction. Residues Lys-37–Arg-77 are disordered. An N-linked (GlcNAc...) asparagine glycan is attached at Asn-38. Positions Ser-47–Ala-70 are enriched in low complexity. Residues Asn-73–Ala-967 are metalloprotease. N-linked (GlcNAc...) asparagine glycans are attached at residues Asn-110, Asn-132, Asn-147, Asn-206, Asn-269, and Asn-296. Gly-355–Asn-359 is a substrate binding site. Residue His-391 coordinates Zn(2+). Catalysis depends on Glu-392, which acts as the Proton acceptor. Zn(2+) is bound by residues His-395 and Glu-414. Residues Asn-513, Asn-574, Asn-584, Asn-628, Asn-684, and Asn-742 are each glycosylated (N-linked (GlcNAc...) asparagine). Cys-764 and Cys-771 are disulfide-bonded. N-linked (GlcNAc...) asparagine glycosylation is present at Asn-785. A disulfide bridge links Cys-801 with Cys-837.

The protein belongs to the peptidase M1 family. In terms of assembly, homodimer. It depends on Zn(2+) as a cofactor. As to expression, detected in the plasma and granule fractions of egg yolk (at protein level).

It localises to the cell membrane. The catalysed reaction is Differs from other aminopeptidases in broad specificity for amino acids in the P1 position and the ability to hydrolyze peptides of four or five residues that contain Pro in the P1' position.. In terms of biological role, broad specificity aminopeptidase. Degrades a variety of peptides possessing various N-terminal amino acids including hydrophobic, basic and acidic amino acids. Preferentially hydrolyzes small peptides consisting of 4 or 5 amino acids. Hydrolyzes the N-terminal Xaa-Pro bonds in the chicken brain peptide Leu-Pro-Leu-Arg-PheNH2, the substance P fragment Arg-Pro-Lys-Pro and the bradykinin fragment Arg-Pro-Pro-Gly-Phe. Hydrolyzes the N-formylated peptides fMet-Leu-Phe, fMet-Ala-Gly-Ser-Glu and fMet-Nle-Leu-Phe-Nle-Tyr-Lys, but does not hydrolyze peptides with acetylation or pyroglutamic acid at N-terminus. Does not hydrolyze large peptides such as complete substance P, bradykinin or schistoFLRFamide. The polypeptide is Aminopeptidase Ey (ANPEP) (Gallus gallus (Chicken)).